Here is a 247-residue protein sequence, read N- to C-terminus: NH(3)-dependent NAD(+) synthetase (247 aa).

An ATP-binding site is contributed by 29–36 (GLSGGVDS). D35 is a Mg(2+) binding site. A deamido-NAD(+)-binding site is contributed by R112. T132 is an ATP binding site. Residue E137 coordinates Mg(2+). Positions 145 and 152 each coordinate deamido-NAD(+). K161 and S183 together coordinate ATP. Residue 233-234 (HK) coordinates deamido-NAD(+).

Belongs to the NAD synthetase family. Homodimer.

It catalyses the reaction deamido-NAD(+) + NH4(+) + ATP = AMP + diphosphate + NAD(+) + H(+). It functions in the pathway cofactor biosynthesis; NAD(+) biosynthesis; NAD(+) from deamido-NAD(+) (ammonia route): step 1/1. In terms of biological role, catalyzes the ATP-dependent amidation of deamido-NAD to form NAD. Uses ammonia as a nitrogen source. The chain is NH(3)-dependent NAD(+) synthetase from Archaeoglobus fulgidus (strain ATCC 49558 / DSM 4304 / JCM 9628 / NBRC 100126 / VC-16).